The chain runs to 411 residues: MRFIEEFINKGYFHQCTDLDRLTAITKETKIAAYIGFDCTATSLHIGSLMQIMILRLLQQHGHKPIVIIGGGTSKIGDPTWKDEVRKILSKEDIAKNAEGIKKSLSKFIKFGDGKSDAIMLDNAEWLDSFNYLDFLRDFGSYFSVNRMLTMDSVKLRLEREQHLSFLEFNYMLLQAYDFYYLSKHYNCSLQLGGSDQWGNIVMGADLIRKISGKEVFGMTTPLLTTSSGAKMGKTAAGAVWLNEDLLSPYDYYQYWRNCEDADIVRFAKLYSEFTQEELNRFESLAAEDINAAKKQLAYELTKLCHSEQAAKSALETAVKIFEEGQIDENLPTVVLEQEVLQAGISAYELFHEAGLATSKSEARKLIRGNGAKINDRLVEDENMIINTNFLLDKKVIKLSAGKKKHILVRV.

Y34 contributes to the L-tyrosine binding site. The 'HIGH' region motif lies at 39–48; the sequence is CTATSLHIGS. Residues Y171 and Q175 each contribute to the L-tyrosine site. The short motif at 231–235 is the 'KMSKS' region element; that stretch reads KMGKT. K234 serves as a coordination point for ATP. The S4 RNA-binding domain occupies 345–411; that stretch reads ISAYELFHEA…GKKKHILVRV (67 aa).

This sequence belongs to the class-I aminoacyl-tRNA synthetase family. TyrS type 1 subfamily. Homodimer.

The protein localises to the cytoplasm. It carries out the reaction tRNA(Tyr) + L-tyrosine + ATP = L-tyrosyl-tRNA(Tyr) + AMP + diphosphate + H(+). Catalyzes the attachment of tyrosine to tRNA(Tyr) in a two-step reaction: tyrosine is first activated by ATP to form Tyr-AMP and then transferred to the acceptor end of tRNA(Tyr). This Rickettsia conorii (strain ATCC VR-613 / Malish 7) protein is Tyrosine--tRNA ligase.